We begin with the raw amino-acid sequence, 424 residues long: 3-oxo-tetronate kinase (424 aa).

ATP is bound by residues serine 264, 363–366 (GGET), and glycine 408.

The protein belongs to the four-carbon acid sugar kinase family.

It catalyses the reaction 3-dehydro-L-erythronate + ATP = 3-dehydro-4-O-phospho-L-erythronate + ADP + H(+). The catalysed reaction is 3-dehydro-D-erythronate + ATP = 3-dehydro-4-O-phospho-D-erythronate + ADP + H(+). Its function is as follows. Catalyzes the ATP-dependent phosphorylation of 3-oxo-tetronate to 3-oxo-tetronate 4-phosphate. The polypeptide is 3-oxo-tetronate kinase (Methylobacterium radiotolerans (strain ATCC 27329 / DSM 1819 / JCM 2831 / NBRC 15690 / NCIMB 10815 / 0-1)).